Reading from the N-terminus, the 363-residue chain is Putative RAD2-like endonuclease 095R (363 aa).

The protein belongs to the XPG/RAD2 endonuclease family. It depends on Mg(2+) as a cofactor.

Its subcellular location is the host nucleus. In terms of biological role, probable endonuclease. The chain is Putative RAD2-like endonuclease 095R from Frog virus 3 (isolate Goorha) (FV-3).